The chain runs to 106 residues: Heat shock protein HspQ (106 aa).

The segment at 80–106 (DEHLDNDSMDELSQSIRNQLQAPRLRN) is disordered. Positions 90-100 (ELSQSIRNQLQ) are enriched in polar residues.

This sequence belongs to the HspQ family.

Its subcellular location is the cytoplasm. Functionally, involved in the degradation of certain denaturated proteins, including DnaA, during heat shock stress. The protein is Heat shock protein HspQ of Proteus mirabilis (strain HI4320).